The chain runs to 278 residues: Antiviral protein MAP (278 aa).

The first 28 residues, 1–28 (MLTTTKVFFLLLTTWITWYAIVNPQSRA), serve as a signal peptide directing secretion. C64 and C248 are oxidised to a cystine. E196 is an active-site residue.

It carries out the reaction Endohydrolysis of the N-glycosidic bond at one specific adenosine on the 28S rRNA.. Inhibits viral infection of plants, and protein synthesis in vitro. The polypeptide is Antiviral protein MAP (Mirabilis jalapa (Garden four-o'clock)).